We begin with the raw amino-acid sequence, 463 residues long: uncharacterized protein (463 aa).

The protein belongs to the mycobacterial PPE family.

This is an uncharacterized protein from Mycobacterium tuberculosis (strain CDC 1551 / Oshkosh).